Reading from the N-terminus, the 311-residue chain is Glycine--tRNA ligase alpha subunit (311 aa).

This sequence belongs to the class-II aminoacyl-tRNA synthetase family. Tetramer of two alpha and two beta subunits.

The protein localises to the cytoplasm. The catalysed reaction is tRNA(Gly) + glycine + ATP = glycyl-tRNA(Gly) + AMP + diphosphate. This chain is Glycine--tRNA ligase alpha subunit, found in Rhizobium meliloti (strain 1021) (Ensifer meliloti).